A 445-amino-acid polypeptide reads, in one-letter code: Xylose isomerase (445 aa).

Active-site residues include His107 and Asp110. The Mg(2+) site is built by Glu238, Glu274, His277, Asp302, Asp313, Asp315, and Asp345.

Belongs to the xylose isomerase family. Homotetramer. Mg(2+) is required as a cofactor.

It localises to the cytoplasm. It catalyses the reaction alpha-D-xylose = alpha-D-xylulofuranose. The polypeptide is Xylose isomerase (xylA) (Priestia megaterium (strain DSM 319 / IMG 1521) (Bacillus megaterium)).